We begin with the raw amino-acid sequence, 287 residues long: Bifunctional protein FolD (287 aa).

Residues G168–S170, S193, and I234 contribute to the NADP(+) site.

This sequence belongs to the tetrahydrofolate dehydrogenase/cyclohydrolase family. In terms of assembly, homodimer.

The enzyme catalyses (6R)-5,10-methylene-5,6,7,8-tetrahydrofolate + NADP(+) = (6R)-5,10-methenyltetrahydrofolate + NADPH. It carries out the reaction (6R)-5,10-methenyltetrahydrofolate + H2O = (6R)-10-formyltetrahydrofolate + H(+). The protein operates within one-carbon metabolism; tetrahydrofolate interconversion. Catalyzes the oxidation of 5,10-methylenetetrahydrofolate to 5,10-methenyltetrahydrofolate and then the hydrolysis of 5,10-methenyltetrahydrofolate to 10-formyltetrahydrofolate. The chain is Bifunctional protein FolD from Clostridioides difficile (strain 630) (Peptoclostridium difficile).